The chain runs to 280 residues: Shikimate dehydrogenase (NADP(+)) (280 aa).

Shikimate-binding positions include 18-20 (SRS) and T65. The active-site Proton acceptor is the K69. Shikimate is bound by residues N90 and D105. NADP(+)-binding positions include 130–134 (GAGGA), 154–159 (NRTLAR), and L219. Residue Y221 coordinates shikimate. G242 is a binding site for NADP(+).

The protein belongs to the shikimate dehydrogenase family. Homodimer.

The enzyme catalyses shikimate + NADP(+) = 3-dehydroshikimate + NADPH + H(+). It participates in metabolic intermediate biosynthesis; chorismate biosynthesis; chorismate from D-erythrose 4-phosphate and phosphoenolpyruvate: step 4/7. In terms of biological role, involved in the biosynthesis of the chorismate, which leads to the biosynthesis of aromatic amino acids. Catalyzes the reversible NADPH linked reduction of 3-dehydroshikimate (DHSA) to yield shikimate (SA). The polypeptide is Shikimate dehydrogenase (NADP(+)) (Mesorhizobium japonicum (strain LMG 29417 / CECT 9101 / MAFF 303099) (Mesorhizobium loti (strain MAFF 303099))).